The sequence spans 332 residues: Small ribosomal subunit biogenesis GTPase RsgA (332 aa).

In terms of domain architecture, CP-type G spans Arg-103–Leu-259. GTP-binding positions include Thr-148 to Asp-151 and Gly-201 to Thr-209. Positions 281, 286, 288, and 294 each coordinate Zn(2+).

This sequence belongs to the TRAFAC class YlqF/YawG GTPase family. RsgA subfamily. Monomer. Associates with 30S ribosomal subunit, binds 16S rRNA. It depends on Zn(2+) as a cofactor.

The protein localises to the cytoplasm. In terms of biological role, one of several proteins that assist in the late maturation steps of the functional core of the 30S ribosomal subunit. Helps release RbfA from mature subunits. May play a role in the assembly of ribosomal proteins into the subunit. Circularly permuted GTPase that catalyzes slow GTP hydrolysis, GTPase activity is stimulated by the 30S ribosomal subunit. The polypeptide is Small ribosomal subunit biogenesis GTPase RsgA (Xylella fastidiosa (strain M23)).